The following is a 376-amino-acid chain: Erythronate-4-phosphate dehydrogenase (376 aa).

The substrate site is built by serine 45 and threonine 67. NAD(+) is bound at residue aspartate 147. The active site involves arginine 209. Residue aspartate 233 participates in NAD(+) binding. The active site involves glutamate 238. Residue histidine 255 is the Proton donor of the active site. Glycine 258 contacts NAD(+). Tyrosine 259 is a substrate binding site.

This sequence belongs to the D-isomer specific 2-hydroxyacid dehydrogenase family. PdxB subfamily. Homodimer.

The protein resides in the cytoplasm. The catalysed reaction is 4-phospho-D-erythronate + NAD(+) = (R)-3-hydroxy-2-oxo-4-phosphooxybutanoate + NADH + H(+). Its pathway is cofactor biosynthesis; pyridoxine 5'-phosphate biosynthesis; pyridoxine 5'-phosphate from D-erythrose 4-phosphate: step 2/5. In terms of biological role, catalyzes the oxidation of erythronate-4-phosphate to 3-hydroxy-2-oxo-4-phosphonooxybutanoate. The chain is Erythronate-4-phosphate dehydrogenase from Shewanella sp. (strain W3-18-1).